Consider the following 391-residue polypeptide: S-adenosylmethionine synthase (391 aa).

Histidine 14 provides a ligand contact to ATP. Aspartate 16 is a Mg(2+) binding site. Glutamate 42 serves as a coordination point for K(+). L-methionine contacts are provided by glutamate 55 and glutamine 98. A flexible loop region spans residues 98–108 (QSVDIAMGVDE). ATP is bound by residues 172–174 (DGK), 238–239 (RF), aspartate 247, 253–254 (RK), alanine 270, and lysine 274. An L-methionine-binding site is contributed by aspartate 247. Lysine 278 serves as a coordination point for L-methionine.

It belongs to the AdoMet synthase family. In terms of assembly, homotetramer; dimer of dimers. Requires Mg(2+) as cofactor. K(+) serves as cofactor.

It is found in the cytoplasm. It carries out the reaction L-methionine + ATP + H2O = S-adenosyl-L-methionine + phosphate + diphosphate. It functions in the pathway amino-acid biosynthesis; S-adenosyl-L-methionine biosynthesis; S-adenosyl-L-methionine from L-methionine: step 1/1. Functionally, catalyzes the formation of S-adenosylmethionine (AdoMet) from methionine and ATP. The overall synthetic reaction is composed of two sequential steps, AdoMet formation and the subsequent tripolyphosphate hydrolysis which occurs prior to release of AdoMet from the enzyme. The sequence is that of S-adenosylmethionine synthase from Clostridium botulinum (strain Langeland / NCTC 10281 / Type F).